The chain runs to 288 residues: MTDTVIHTESATSKYVNVVEDGTELRVHYNDTGTGNEALVLLHGSGPGATGWANFHRNVDAFANAGYRVILVDCPGWGKSDSIVCTGSRSDLNARVLAGVLDTLGIGRAHLVGNSMGGHSAVAFALSYPERVGKLVLMGGGTGGPSQFVPMPTEGIKLLQALYRDPTLENLKKMLNVFVYDASTMTEELMQTRLENMLGRRDHLENFVKSLTANPKQFPDYGHRLSEIKAPALVIWGRDDRFVPMDVGLRLVWNMPNADLHVFGRCGHWAQWEHAERFNRMVLEFLRR.

Residues 38-274 (ALVLLHGSGP…RCGHWAQWEH (237 aa)) enclose the AB hydrolase-1 domain. Residue histidine 268 is the Proton acceptor of the active site.

This sequence belongs to the AB hydrolase superfamily. MhpC family. Homodimer.

It catalyses the reaction (2Z,4E)-2-hydroxy-6-oxonona-2,4-dienedioate + H2O = (2Z)-2-hydroxypenta-2,4-dienoate + succinate + H(+). It carries out the reaction (2Z,4E,7E)-2-hydroxy-6-oxonona-2,4,7-trienedioate + H2O = (2Z)-2-hydroxypenta-2,4-dienoate + fumarate + H(+). The protein operates within aromatic compound metabolism; 3-phenylpropanoate degradation. Catalyzes the cleavage of the C5-C6 bond of 2-hydroxy-6-oxononadienedioate and 2-hydroxy-6-oxononatrienedioate, a dienol ring fission product of the bacterial meta-cleavage pathway for degradation of phenylpropionic acid. This chain is 2-hydroxy-6-oxononadienedioate/2-hydroxy-6-oxononatrienedioate hydrolase, found in Burkholderia vietnamiensis (strain G4 / LMG 22486) (Burkholderia cepacia (strain R1808)).